Here is a 35-residue protein sequence, read N- to C-terminus: Flavodoxin (35 aa).

Residues 4–35 form the Flavodoxin-like domain; sequence IGLFYGTZTGKTESVAEIIDEFGDEVVTLDID.

Belongs to the flavodoxin family. FMN is required as a cofactor.

In terms of biological role, low-potential electron donor to a number of redox enzymes. The sequence is that of Flavodoxin from Nostoc sp. (strain MAC).